The primary structure comprises 771 residues: ATP-dependent DNA helicase UvrD1 (771 aa).

The interval 1–21 (MSVHATDAKPPGPSPADQLLD) is disordered. In terms of domain architecture, UvrD-like helicase ATP-binding spans 21 to 311 (DGLNPQQRQA…ILLEQNYRST (291 aa)). ATP-binding positions include 45–50 (GSGKTA) and Arg309. Residues 312-603 (QNILSAANSV…TLMTLHTAKG (292 aa)) enclose the UvrD-like helicase C-terminal domain. Residues 691-716 (FSAPVSGAGRFGSARPSPTRSGASRR) form a disordered region.

It belongs to the helicase family. UvrD subfamily. In terms of assembly, monomer. Mg(2+) serves as cofactor.

The catalysed reaction is Couples ATP hydrolysis with the unwinding of duplex DNA by translocating in the 3'-5' direction.. It carries out the reaction ATP + H2O = ADP + phosphate + H(+). In terms of biological role, DNA-dependent ATPase, acting on dsDNA with a 3'-ssDNA tail, unwinding with 3'-to 5'-polarity. Also highly efficient on nicked DNA. Involved in the post-incision events of nucleotide excision repair. This is ATP-dependent DNA helicase UvrD1 (uvrD1) from Mycobacterium bovis (strain ATCC BAA-935 / AF2122/97).